Here is a 256-residue protein sequence, read N- to C-terminus: Thiazole synthase (256 aa).

The Schiff-base intermediate with DXP role is filled by Lys96. Residues Gly157, 183-184 (AG), and 205-206 (NT) contribute to the 1-deoxy-D-xylulose 5-phosphate site.

This sequence belongs to the ThiG family. As to quaternary structure, homotetramer. Forms heterodimers with either ThiH or ThiS.

Its subcellular location is the cytoplasm. It carries out the reaction [ThiS sulfur-carrier protein]-C-terminal-Gly-aminoethanethioate + 2-iminoacetate + 1-deoxy-D-xylulose 5-phosphate = [ThiS sulfur-carrier protein]-C-terminal Gly-Gly + 2-[(2R,5Z)-2-carboxy-4-methylthiazol-5(2H)-ylidene]ethyl phosphate + 2 H2O + H(+). Its pathway is cofactor biosynthesis; thiamine diphosphate biosynthesis. In terms of biological role, catalyzes the rearrangement of 1-deoxy-D-xylulose 5-phosphate (DXP) to produce the thiazole phosphate moiety of thiamine. Sulfur is provided by the thiocarboxylate moiety of the carrier protein ThiS. In vitro, sulfur can be provided by H(2)S. This Clostridioides difficile (strain 630) (Peptoclostridium difficile) protein is Thiazole synthase.